Here is a 674-residue protein sequence, read N- to C-terminus: uncharacterized protein (674 aa).

An N-terminal signal peptide occupies residues 1–24 (MKTLKALKIFIIVYISSVSLESFA). The next 2 helical transmembrane spans lie at 226-246 (IIGA…ALNK) and 254-274 (ITLF…LEPL). Positions 363-384 (GNGPGGNNKPIPNFDPDSKKDR) are disordered. Helical transmembrane passes span 409 to 429 (IIIL…LLYF), 436 to 456 (CMIT…MVLF), 469 to 489 (VCIS…LLIT), and 562 to 582 (VVSI…FYYF). A disordered region spans residues 624–674 (SSVHAQGKSPVEDKPDIGSKRKDGVQQGEDSENSSGGELADLASGSGGGKL). The segment covering 633 to 647 (PVEDKPDIGSKRKDG) has biased composition (basic and acidic residues).

It belongs to the TrbL/VirB6 family.

It is found in the cell membrane. This is an uncharacterized protein from Rickettsia typhi (strain ATCC VR-144 / Wilmington).